The following is a 326-amino-acid chain: Protein phosphatase 1 regulatory subunit SDS22 homolog (326 aa).

A disordered region spans residues 1–22 (MSNDKSAEVVVLPRENDEESKE). LRR repeat units follow at residues 35–57 (DIDSPEIDLTHTRADHIPDLTGF), 58–80 (PKIEELRMRNNLLVSISPTISSL), 81–102 (VTLTSLDLYENQLTEISHLESL), 103–126 (VNLVSLDLSYNRIRQINGLDKLTK), 128–146 (ETLYLVSNKIEKIENLEAL), 147–170 (TQLKLLELGDNRIKKIENIGHLVN), 172–190 (DELFIGKNKIRQLEGVETL), 191–212 (QKLSVLSLPGNRIVKIENVEQL), 213–236 (NNLKELYLSDQGLQDIHGVEPLTN), 238–256 (LLLDVANNEIKTFSGVERL), 257–280 (ESLNDFWANDNKVESFSEIEQLSK), and 281–304 (LKGLQTVYLERNPFYFNDTNQYRR).

This sequence belongs to the SDS22 family.

The protein resides in the nucleus. Its function is as follows. Regulatory subunit of protein phosphatase 1. In Caenorhabditis elegans, this protein is Protein phosphatase 1 regulatory subunit SDS22 homolog (sds-22).